The following is a 173-amino-acid chain: Large ribosomal subunit protein uL10 (173 aa).

This sequence belongs to the universal ribosomal protein uL10 family. As to quaternary structure, part of the ribosomal stalk of the 50S ribosomal subunit. The N-terminus interacts with L11 and the large rRNA to form the base of the stalk. The C-terminus forms an elongated spine to which L12 dimers bind in a sequential fashion forming a multimeric L10(L12)X complex.

Functionally, forms part of the ribosomal stalk, playing a central role in the interaction of the ribosome with GTP-bound translation factors. This chain is Large ribosomal subunit protein uL10, found in Desulfatibacillum aliphaticivorans.